The following is an 868-amino-acid chain: Protein translocase subunit SecA (868 aa).

ATP is bound by residues Q85, G103 to T107, and D508.

This sequence belongs to the SecA family. As to quaternary structure, monomer and homodimer. Part of the essential Sec protein translocation apparatus which comprises SecA, SecYEG and auxiliary proteins SecDF. Other proteins may also be involved.

The protein localises to the cell membrane. It is found in the cytoplasm. It carries out the reaction ATP + H2O + cellular proteinSide 1 = ADP + phosphate + cellular proteinSide 2.. Functionally, part of the Sec protein translocase complex. Interacts with the SecYEG preprotein conducting channel. Has a central role in coupling the hydrolysis of ATP to the transfer of proteins into and across the cell membrane, serving as an ATP-driven molecular motor driving the stepwise translocation of polypeptide chains across the membrane. This Deinococcus radiodurans (strain ATCC 13939 / DSM 20539 / JCM 16871 / CCUG 27074 / LMG 4051 / NBRC 15346 / NCIMB 9279 / VKM B-1422 / R1) protein is Protein translocase subunit SecA.